Here is an 825-residue protein sequence, read N- to C-terminus: Breast cancer anti-estrogen resistance protein 3 (825 aa).

Residue Ala2 is modified to N-acetylalanine. Phosphoserine occurs at positions 32, 78, and 83. The interval 40-106 is disordered; it reads DAYQDVSIHG…DRHGETFTFR (67 aa). Residues 79–94 are compositionally biased toward polar residues; that stretch reads PRQNSPVTQDGIQESP. Basic and acidic residues predominate over residues 95–106; sequence WQDRHGETFTFR. The SH2 domain maps to 154–253; the sequence is WYHGRIPRQV…QSGAIIFQPI (100 aa). Ser182 and Ser290 each carry phosphoserine. Lys334 is subject to N6-methyllysine. A phosphoserine mark is found at Ser358, Ser363, and Ser375. At Arg442 the chain carries Omega-N-methylarginine. Ser471 carries the post-translational modification Phosphoserine. Residues 548-818 enclose the Ras-GEF domain; that stretch reads DPKVIAQHVL…TALSRKLEPP (271 aa). The tract at residues 744-748 is mediates the interaction with BCAR1/p130CAS; the sequence is LATAR.

As to quaternary structure, part of a complex comprised of PTPRA, BCAR1, BCAR3 (via SH2 domain) and SRC; the formation of the complex is dependent on integrin mediated-tyrosine phosphorylation of PTPRA. Within the complex, interacts (via SH2 domain) with PTPRA (when phosphorylated on 'Tyr-798'). Interacts (via Ras-GEF domain) with BCAR1. Interacts (via Ras-GEF domain) with NEDD9. Interacts with PTK2/FAK1. Interacts with PTPN1. Interacts (via SH2 domain) with EGFR (when tyrosine-phosphorylated). In terms of processing, phosphorylated on tyrosine residues. Ubiquitously expressed. Found in several cancer cell lines, but not in nonmalignant breast tissue.

The protein resides in the cytoplasm. It localises to the cell junction. Its subcellular location is the focal adhesion. Acts as an adapter protein downstream of several growth factor receptors to promote cell proliferation, migration, and redistribution of actin fibers. Specifically involved in INS/insulin signaling pathway by mediating MAPK1/ERK2-MAPK3/ERK1 activation and DNA synthesis. Promotes insulin-mediated membrane ruffling. In response to vasoconstrictor peptide EDN1, involved in the activation of RAP1 downstream of PTK2B via interaction with phosphorylated BCAR1. Inhibits cell migration and invasion via regulation of TGFB-mediated matrix digestion, actin filament rearrangement, and inhibition of invadopodia activity. May inhibit TGFB-SMAD signaling, via facilitating BCAR1 and SMAD2 and/or SMAD3 interaction. Regulates EGF-induced DNA synthesis. Required for the maintenance of ocular lens morphology and structural integrity, potentially via regulation of focal adhesion complex signaling. Acts upstream of PTPRA to regulate the localization of BCAR1 and PTPRA to focal adhesions, via regulation of SRC-mediated phosphorylation of PTPRA. Positively regulates integrin-induced tyrosine phosphorylation of BCAR1. Acts as a guanine nucleotide exchange factor (GEF) for small GTPases RALA, RAP1A and RRAS. However, in a contrasting study, lacks GEF activity towards RAP1. The sequence is that of Breast cancer anti-estrogen resistance protein 3 (BCAR3) from Homo sapiens (Human).